The following is a 511-amino-acid chain: Cytochrome P450 4B1 (511 aa).

Glu315 contributes to the heme binding site. Ser436 carries the phosphoserine modification. Cys453 contacts heme.

This sequence belongs to the cytochrome P450 family. Heme is required as a cofactor. As to expression, detected in the liver and lung (at protein level).

It localises to the endoplasmic reticulum membrane. Its subcellular location is the microsome membrane. The catalysed reaction is an organic molecule + reduced [NADPH--hemoprotein reductase] + O2 = an alcohol + oxidized [NADPH--hemoprotein reductase] + H2O + H(+). Its function is as follows. Cytochromes P450 are a group of heme-thiolate monooxygenases. In liver microsomes, this enzyme is involved in an NADPH-dependent electron transport pathway. It oxidizes a variety of structurally unrelated compounds, including steroids, fatty acids, and xenobiotics. The protein is Cytochrome P450 4B1 (CYP4B1) of Homo sapiens (Human).